Reading from the N-terminus, the 634-residue chain is Chaperone protein DnaK (634 aa).

T199 carries the post-translational modification Phosphothreonine; by autocatalysis. A compositionally biased stretch (low complexity) spans 601–618 (AAAGQAQAESGAGAQGNA). Residues 601–634 (AAAGQAQAESGAGAQGNAKPDDVVDAEFEEVDKK) form a disordered region. The span at 623-634 (VVDAEFEEVDKK) shows a compositional bias: acidic residues.

It belongs to the heat shock protein 70 family.

Acts as a chaperone. This chain is Chaperone protein DnaK, found in Acidithiobacillus ferrooxidans (strain ATCC 23270 / DSM 14882 / CIP 104768 / NCIMB 8455) (Ferrobacillus ferrooxidans (strain ATCC 23270)).